A 239-amino-acid chain; its full sequence is tRNA uridine(34) hydroxylase (239 aa).

One can recognise a Rhodanese domain in the interval 124-214 (QGRELVMLDT…GILKYFEETD (91 aa)). The active-site Cysteine persulfide intermediate is C178.

The protein belongs to the TrhO family.

The enzyme catalyses uridine(34) in tRNA + AH2 + O2 = 5-hydroxyuridine(34) in tRNA + A + H2O. In terms of biological role, catalyzes oxygen-dependent 5-hydroxyuridine (ho5U) modification at position 34 in tRNAs. The sequence is that of tRNA uridine(34) hydroxylase from Bordetella parapertussis (strain 12822 / ATCC BAA-587 / NCTC 13253).